Here is a 504-residue protein sequence, read N- to C-terminus: Anaerobic nitric oxide reductase transcription regulator NorR (504 aa).

At Asp57 the chain carries 4-aspartylphosphate. Residues Met187–Val416 form the Sigma-54 factor interaction domain. ATP is bound by residues Gly215–Glu222 and Ala278–Glu287. A DNA-binding region (H-T-H motif) is located at residues Trp479–Lys498.

It functions in the pathway nitrogen metabolism; nitric oxide reduction. Its function is as follows. Required for the expression of anaerobic nitric oxide (NO) reductase, acts as a transcriptional activator for at least the norVW operon. Activation also requires sigma-54. This is Anaerobic nitric oxide reductase transcription regulator NorR from Shigella flexneri serotype 5b (strain 8401).